We begin with the raw amino-acid sequence, 126 residues long: Methylglyoxal synthase (126 aa).

Residues Met-1–Gln-126 form the MGS-like domain. Residues His-9, Lys-13, Thr-35 to Thr-38, and Ser-55 to Gly-56 each bind substrate. Asp-61 serves as the catalytic Proton donor/acceptor. His-88 serves as a coordination point for substrate.

It belongs to the methylglyoxal synthase family.

The enzyme catalyses dihydroxyacetone phosphate = methylglyoxal + phosphate. Catalyzes the formation of methylglyoxal from dihydroxyacetone phosphate. The protein is Methylglyoxal synthase of Thermus thermophilus (strain ATCC BAA-163 / DSM 7039 / HB27).